Here is a 479-residue protein sequence, read N- to C-terminus: Solute carrier family 7 member 13 (479 aa).

The Cytoplasmic portion of the chain corresponds to 1-14; it reads MAMDIEKKIYLKRQ. Residues 15 to 35 form a helical membrane-spanning segment; sequence LGYFWGTNFLIINIIGAGIFV. At 36–47 the chain is on the extracellular side; sequence SPKGVLQYSSMN. A helical membrane pass occupies residues 48 to 68; sequence VGVSLCVWVFCAVLSMTSTLC. Topologically, residues 69 to 89 are cytoplasmic; that stretch reads AAEIGITFPYTVAHYYFLKRC. The chain crosses the membrane as a helical span at residues 90 to 110; that stretch reads FGPFVAFLRLWTSLFTGPGVL. At 111-129 the chain is on the extracellular side; that stretch reads ASQALLLAEYGIQPFYPSC. Residues 130–150 traverse the membrane as a helical segment; sequence SAPAVPKKCLALAMLWIVGIL. Topologically, residues 151–165 are cytoplasmic; the sequence is NSRGVKELSWLQTVS. Residues 166-186 form a helical membrane-spanning segment; it reads MVLKMGILSFISLSGLFLLVT. Residues 187–208 are Extracellular-facing; the sequence is GRKENVRRLQNAFDAEFPEVSR. Residues 209-229 form a helical membrane-spanning segment; it reads LIEAIFQGYFAFSGGGSFTYV. The Cytoplasmic portion of the chain corresponds to 230–242; sequence AGELKEPSKTIPR. The helical transmembrane segment at 243–263 threads the bilayer; that stretch reads CIFTALPLVTVVYLLANLSYL. Topologically, residues 264–289 are extracellular; that stretch reads TVLSPQELLSSDAVALTWTDRVIPQL. Residues 290–310 form a helical membrane-spanning segment; that stretch reads TWSVPFAISASLFSNLVTSVF. At 311–338 the chain is on the cytoplasmic side; that stretch reads ETSRTSYIASRNGQLPLLCSTLNVHSSP. Residues 339–359 traverse the membrane as a helical segment; the sequence is FIAVLLDVSMGSIAIVLTNLI. A topological domain (extracellular) is located at residue E360. Residues 361 to 381 traverse the membrane as a helical segment; sequence LINYLFFVFSIWTVLSVIGIL. The Cytoplasmic portion of the chain corresponds to 382 to 396; the sequence is KLRYQEPNLHRPYKV. A helical membrane pass occupies residues 397 to 417; that stretch reads FSPFLFITAAISLSMVLIPLI. Residues 418–423 are Extracellular-facing; it reads KSPKMQ. Residues 424-444 traverse the membrane as a helical segment; the sequence is YIYVFLFFLGGLLFYVPLIHF. At 445 to 479 the chain is on the cytoplasmic side; that stretch reads KLKLIWFQKLTCYLQLLFNICIPDVSDEHVAEEES.

The protein belongs to the amino acid-polyamine-organocation (APC) superfamily. Disulfide-linked heterodimer composed of the catalytic light subunit SLC7A13 and the heavy subunit SLC3A1.

The protein localises to the apical cell membrane. The catalysed reaction is L-cystine(out) + L-aspartate(in) = L-cystine(in) + L-aspartate(out). It catalyses the reaction L-cystine(out) = L-cystine(in). The enzyme catalyses L-aspartate(in) + L-glutamate(out) = L-aspartate(out) + L-glutamate(in). It carries out the reaction L-aspartate(in) + L-glutamine(out) = L-aspartate(out) + L-glutamine(in). The catalysed reaction is L-aspartate(in) + L-methionine(out) = L-aspartate(out) + L-methionine(in). It catalyses the reaction L-leucine(out) + L-aspartate(in) = L-leucine(in) + L-aspartate(out). The enzyme catalyses L-valine(out) + L-aspartate(in) = L-valine(in) + L-aspartate(out). It carries out the reaction L-aspartate(in) + L-phenylalanine(out) = L-aspartate(out) + L-phenylalanine(in). The catalysed reaction is L-tyrosine(out) + L-aspartate(in) = L-tyrosine(in) + L-aspartate(out). It catalyses the reaction L-tryptophan(out) + L-aspartate(in) = L-tryptophan(in) + L-aspartate(out). Associates with SLC3A1/rBAT to form a functional heterodimeric complex that transports anionic and neutral amino acids across the apical plasma membrane of renal epithelium. Preferentially mediates exchange transport, but can also operate via facilitated diffusion. May act as a major transporter for L-cystine in late proximal tubules, ensuring its reabsorption from the luminal fluid in exchange for cytosolic L-glutamate or L-aspartate. The polypeptide is Solute carrier family 7 member 13 (Slc7a13) (Rattus norvegicus (Rat)).